Here is a 271-residue protein sequence, read N- to C-terminus: Tryptophan synthase alpha chain (271 aa).

Residues glutamate 49 and aspartate 60 each act as proton acceptor in the active site.

Belongs to the TrpA family. In terms of assembly, tetramer of two alpha and two beta chains.

It carries out the reaction (1S,2R)-1-C-(indol-3-yl)glycerol 3-phosphate + L-serine = D-glyceraldehyde 3-phosphate + L-tryptophan + H2O. It functions in the pathway amino-acid biosynthesis; L-tryptophan biosynthesis; L-tryptophan from chorismate: step 5/5. Its function is as follows. The alpha subunit is responsible for the aldol cleavage of indoleglycerol phosphate to indole and glyceraldehyde 3-phosphate. The sequence is that of Tryptophan synthase alpha chain from Burkholderia lata (strain ATCC 17760 / DSM 23089 / LMG 22485 / NCIMB 9086 / R18194 / 383).